A 555-amino-acid polypeptide reads, in one-letter code: Solute carrier family 22 member 2 (555 aa).

Over 1–21 (MSTVDDILEHIGEFHLFQKQT) the chain is Cytoplasmic. The chain crosses the membrane as a helical span at residues 22–42 (FFLLALLSGAFTPIYVGIVFL). The Extracellular segment spans residues 43–150 (GFTPDHHCWS…LVCAHSWMLD (108 aa)). An N-linked (GlcNAc...) asparagine glycan is attached at Asn71. A helical transmembrane segment spans residues 151 to 171 (LFQSVVNVGFFIGAMMIGYLA). The Cytoplasmic portion of the chain corresponds to 172 to 177 (DRFGRK). The chain crosses the membrane as a helical span at residues 178-198 (FCLLVTILINAISGALMAISP). Topologically, residues 199-210 (NYAWMLVFRFLQ) are extracellular. Residues 211 to 231 (GLVSKAGWLIGYILITEFVGL) form a helical membrane-spanning segment. Residues 232–238 (GYRRMVG) lie on the Cytoplasmic side of the membrane. The chain crosses the membrane as a helical span at residues 239 to 259 (ICYQIAFTVGLLILAGVAYVI). At 260 to 263 (PNWR) the chain is on the extracellular side. Residues 264–284 (WLQFAVTLPNFCFLLYFWCIP) form a helical membrane-spanning segment. A Proline-rich sequence motif is present at residues 284–288 (PESPR). Residues 285–348 (ESPRWLISQN…VRTPQIRKHT (64 aa)) are Cytoplasmic-facing. The chain crosses the membrane as a helical span at residues 349 to 369 (LILMYNWFTSSVLYQGLIMHM). Residues 370-375 (GLAGDN) are Extracellular-facing. Residues 376 to 396 (IYLDFFYSALVEFPAAFIIIL) form a helical membrane-spanning segment. Over 397 to 404 (TIDRVGRR) the chain is Cytoplasmic. A helical membrane pass occupies residues 405 to 425 (YPWAVSNMVAGAACLASVFIP). The Extracellular portion of the chain corresponds to 426–432 (DDLQWLK). Residues 433-453 (ITIACLGRMGITMAYEMVCLV) traverse the membrane as a helical segment. Topologically, residues 454–464 (NAELYPTYIRN) are cytoplasmic. The chain crosses the membrane as a helical span at residues 465–485 (LGVLVCSSMCDIGGIITPFLV). Over 486-494 (YRLTDIWME) the chain is Extracellular. A helical membrane pass occupies residues 495–515 (FPLVVFAVVGLVAGALVLLLP). Topologically, residues 516–555 (ETKGKALPETIEDAENMQRPRKKKEKRIYLQVKQADRPLS) are cytoplasmic.

The protein belongs to the major facilitator (TC 2.A.1) superfamily. Organic cation transporter (TC 2.A.1.19) family. Post-translationally, tyrosine phosphorylated. Expressed in the kidney, in the proximal tubules of cortex and of the outer medulla. In brain, highly expressed predominantly in regions located at the brain-cerebrospinal fluid border, in the leptomeninges, in the choroid plexus and in a layer boarding the third ventricle. In brain, also observed in the granular cell layer of the cerebellum and in the granular layer and pyramidal cells of the hippocampus in the CA1-CA3 regions. Expressed in tracheal and bronchial ciliated epithelium in the respiratory tract. Expression is greater in the kidney of male than of female.

The protein resides in the basolateral cell membrane. It is found in the basal cell membrane. It localises to the apical cell membrane. It catalyses the reaction (R)-noradrenaline(out) = (R)-noradrenaline(in). The enzyme catalyses (R)-adrenaline(out) = (R)-adrenaline(in). It carries out the reaction serotonin(out) = serotonin(in). The catalysed reaction is dopamine(out) = dopamine(in). It catalyses the reaction histamine(out) = histamine(in). The enzyme catalyses thiamine(in) = thiamine(out). It carries out the reaction creatinine(in) = creatinine(out). The catalysed reaction is 1-methylnicotinamide(out) = 1-methylnicotinamide(in). It catalyses the reaction guanidine(out) = guanidine(in). The enzyme catalyses choline(out) = choline(in). It carries out the reaction agmatine(out) = agmatine(in). The catalysed reaction is putrescine(out) = putrescine(in). It catalyses the reaction spermidine(in) = spermidine(out). The enzyme catalyses tyramine(in) = tyramine(out). It carries out the reaction L-histidyl-L-proline diketopiperazine(in) = L-histidyl-L-proline diketopiperazine(out). The catalysed reaction is (R)-salsolinol(in) = (R)-salsolinol(out). It catalyses the reaction N-methyl-(R)-salsolinol(in) = N-methyl-(R)-salsolinol(out). The enzyme catalyses acetylcholine(in) = acetylcholine(out). It carries out the reaction prostaglandin F2alpha(out) = prostaglandin F2alpha(in). The catalysed reaction is prostaglandin E2(out) = prostaglandin E2(in). Its activity is regulated as follows. Tyrosine phosphorylation of the transporter leads to activation of the transport activity. Inhibited by cGMP, most likely through a cGMP-binding protein that interacts with OCT2. Functionally, electrogenic voltage-dependent transporter that mediates the transport of a variety of organic cations such as endogenous bioactive amines, cationic drugs and xenobiotics. Functions as a Na(+)-independent, bidirectional uniporter. Cation cellular uptake or release is driven by the electrochemical potential, i.e. membrane potential and concentration gradient. However, may also engage electroneutral cation exchange when saturating concentrations of cation substrates are reached. Predominantly expressed at the basolateral membrane of hepatocytes and proximal tubules and involved in the uptake and disposition of cationic compounds by hepatic and renal clearance from the blood flow. Implicated in monoamine neurotransmitters uptake such as histamine, dopamine, adrenaline/epinephrine, noradrenaline/norepinephrine, serotonin and tyramine, thereby supporting a physiological role in the central nervous system by regulating interstitial concentrations of neurotransmitters. Also capable of transporting dopaminergic neuromodulators cyclo(his-pro), salsolinol and N-methyl-salsolinol, thereby involved in the maintenance of dopaminergic cell integrity in the central nervous system. Mediates the bidirectional transport of acetylcholine (ACh) at the apical membrane of ciliated cell in airway epithelium, thereby playing a role in luminal release of ACh from bronchial epithelium. Also transports guanidine and endogenous monoamines such as vitamin B1/thiamine, creatinine and N-1-methylnicotinamide (NMN). Mediates the uptake and efflux of quaternary ammonium compound choline. Mediates the bidirectional transport of polyamine agmatine and the uptake of polyamine putrescine. Able to transport non-amine endogenous compounds such as prostaglandin E2 (PGE2) and prostaglandin F2-alpha (PGF2-alpha). Also involved in the uptake of xenobiotic 4-(4-(dimethylamino)styryl)-N-methylpyridinium (ASP). May contribute to regulate the transport of organic compounds in testis across the blood-testis-barrier. This is Solute carrier family 22 member 2 from Rattus norvegicus (Rat).